Here is a 636-residue protein sequence, read N- to C-terminus: Capsid vertex component 2 (636 aa).

Positions M1 to R48 are interaction with major capsid protein/MCP. The segment at D97–S125 is disordered.

The protein belongs to the herpesviridae CVC2 protein family. As to quaternary structure, heterodimerizes with CVC1. Interacts with major capsid protein/MCP and triplex capsid protein 1/TRX1 at the pentamer vertices. Interacts with the large tegument protein/LTP.

The protein localises to the virion. The protein resides in the host nucleus. Its function is as follows. Capsid vertex-specific component that plays a role during viral DNA encapsidation, assuring correct genome cleavage and presumably stabilizing capsids that contain full-length viral genomes. Participates in the interaction between the capsid and the tegument through interaction with the large tegument protein/LTP. The protein is Capsid vertex component 2 of Homo sapiens (Human).